Consider the following 20-residue polypeptide: NVRFDLSGATSSSYKTFIKN.

A disordered region spans residues 1–20 (NVRFDLSGATSSSYKTFIKN). Residues 8 to 20 (GATSSSYKTFIKN) show a composition bias toward polar residues.

This sequence belongs to the ribosome-inactivating protein family. Type 1 RIP subfamily.

It catalyses the reaction Endohydrolysis of the N-glycosidic bond at one specific adenosine on the 28S rRNA.. This Cucurbita pepo (Vegetable marrow) protein is Ribosome-inactivating protein.